We begin with the raw amino-acid sequence, 1407 residues long: DNA-directed RNA polymerase subunit beta' (1407 aa).

The Zn(2+) site is built by cysteine 70, cysteine 72, cysteine 85, and cysteine 88. Positions 460, 462, and 464 each coordinate Mg(2+). 4 residues coordinate Zn(2+): cysteine 814, cysteine 888, cysteine 895, and cysteine 898.

It belongs to the RNA polymerase beta' chain family. As to quaternary structure, the RNAP catalytic core consists of 2 alpha, 1 beta, 1 beta' and 1 omega subunit. When a sigma factor is associated with the core the holoenzyme is formed, which can initiate transcription. Requires Mg(2+) as cofactor. It depends on Zn(2+) as a cofactor.

It catalyses the reaction RNA(n) + a ribonucleoside 5'-triphosphate = RNA(n+1) + diphosphate. In terms of biological role, DNA-dependent RNA polymerase catalyzes the transcription of DNA into RNA using the four ribonucleoside triphosphates as substrates. This Pectobacterium atrosepticum (strain SCRI 1043 / ATCC BAA-672) (Erwinia carotovora subsp. atroseptica) protein is DNA-directed RNA polymerase subunit beta'.